Reading from the N-terminus, the 360-residue chain is Phospho-N-acetylmuramoyl-pentapeptide-transferase (360 aa).

10 helical membrane passes run Ala26–Lys46, Gly70–Trp90, Ser94–Val114, Trp132–Gly152, Val168–Ser188, Gly199–Thr219, Ala236–Phe256, Val263–Leu283, Leu288–Val308, and Val338–Lys358.

Belongs to the glycosyltransferase 4 family. MraY subfamily. It depends on Mg(2+) as a cofactor.

The protein localises to the cell inner membrane. The catalysed reaction is UDP-N-acetyl-alpha-D-muramoyl-L-alanyl-gamma-D-glutamyl-meso-2,6-diaminopimeloyl-D-alanyl-D-alanine + di-trans,octa-cis-undecaprenyl phosphate = di-trans,octa-cis-undecaprenyl diphospho-N-acetyl-alpha-D-muramoyl-L-alanyl-D-glutamyl-meso-2,6-diaminopimeloyl-D-alanyl-D-alanine + UMP. Its pathway is cell wall biogenesis; peptidoglycan biosynthesis. Its function is as follows. Catalyzes the initial step of the lipid cycle reactions in the biosynthesis of the cell wall peptidoglycan: transfers peptidoglycan precursor phospho-MurNAc-pentapeptide from UDP-MurNAc-pentapeptide onto the lipid carrier undecaprenyl phosphate, yielding undecaprenyl-pyrophosphoryl-MurNAc-pentapeptide, known as lipid I. The sequence is that of Phospho-N-acetylmuramoyl-pentapeptide-transferase from Vibrio parahaemolyticus serotype O3:K6 (strain RIMD 2210633).